A 403-amino-acid chain; its full sequence is 8-amino-7-oxononanoate synthase (403 aa).

Arg25 serves as a coordination point for substrate. 112–113 contributes to the pyridoxal 5'-phosphate binding site; sequence GY. His137 lines the substrate pocket. 3 residues coordinate pyridoxal 5'-phosphate: Ser182, His210, and Thr239. Lys242 is subject to N6-(pyridoxal phosphate)lysine. A substrate-binding site is contributed by Thr358.

It belongs to the class-II pyridoxal-phosphate-dependent aminotransferase family. BioF subfamily. In terms of assembly, homodimer. Pyridoxal 5'-phosphate is required as a cofactor.

The enzyme catalyses 6-carboxyhexanoyl-[ACP] + L-alanine + H(+) = (8S)-8-amino-7-oxononanoate + holo-[ACP] + CO2. Its pathway is cofactor biosynthesis; biotin biosynthesis. Its function is as follows. Catalyzes the decarboxylative condensation of pimeloyl-[acyl-carrier protein] and L-alanine to produce 8-amino-7-oxononanoate (AON), [acyl-carrier protein], and carbon dioxide. The sequence is that of 8-amino-7-oxononanoate synthase from Marinomonas sp. (strain MWYL1).